The sequence spans 192 residues: Fanconi anemia core complex-associated protein 20 (192 aa).

Positions 1–16 are enriched in basic residues; it reads MEATRRSRLSLSRRRP. Disordered stretches follow at residues 1–34 and 51–151; these read MEATRRSRLSLSRRRPPLGVRPRSNTAGSLPDGG and LNVD…SSVD. Residues 66-76 are compositionally biased toward basic and acidic residues; that stretch reads QEPRRSPERPP. A phosphoserine mark is found at serine 119 and serine 149. A compositionally biased stretch (low complexity) spans 132–149; the sequence is PSAEEQPSEEQPSQRQSS. Residues 156-192 form a UBZ2-type zinc finger; sequence LQSCPMCQVDFAPGLAQLDIDGHLAQCLADSTDDIEW. Residues cysteine 159, cysteine 162, histidine 178, and cysteine 182 each coordinate Zn(2+).

As to quaternary structure, component of the Fanconi anemia (FA) complex. Interacts with FANCA; interaction is direct. Interacts with REV1.

It localises to the nucleus. The protein resides in the chromosome. Component of the Fanconi anemia (FA) complex required to recruit the FA complex to DNA interstrand cross-links (ICLs) and promote ICLs repair. Following DNA damage recognizes and binds 'Lys-63'-linked ubiquitin generated by RNF8 at ICLs and recruits other components of the FA complex. Promotes translesion synthesis via interaction with REV1. This is Fanconi anemia core complex-associated protein 20 from Bos taurus (Bovine).